A 660-amino-acid polypeptide reads, in one-letter code: Macrolide export ATP-binding/permease protein MacB (660 aa).

Residues 10–248 (LVLENIVRKF…TDSQALYGKQ (239 aa)) form the ABC transporter domain. An ATP-binding site is contributed by 46 to 53 (GASGSGKS). Helical transmembrane passes span 285 to 305 (FLTM…VALG), 532 to 552 (ILTL…GIGV), 593 to 613 (VIGG…FLLF), and 625 to 645 (SIIL…FSPA).

The protein belongs to the ABC transporter superfamily. Macrolide exporter (TC 3.A.1.122) family. Homodimer.

The protein localises to the cell inner membrane. Non-canonical ABC transporter that contains transmembrane domains (TMD), which form a pore in the inner membrane, and an ATP-binding domain (NBD), which is responsible for energy generation. Confers resistance against macrolides. This is Macrolide export ATP-binding/permease protein MacB from Bartonella henselae (strain ATCC 49882 / DSM 28221 / CCUG 30454 / Houston 1) (Rochalimaea henselae).